The primary structure comprises 627 residues: Endoglucanase 5 (627 aa).

The N-terminal stretch at 1 to 26 (MRKFGGSLFGVSLLLSVLLAAATAAA) is a signal peptide. Catalysis depends on aspartate 83, which acts as the Nucleophile. Asparagine 196 is a glycosylation site (N-linked (GlcNAc...) asparagine). The active site involves histidine 416. A glycan (N-linked (GlcNAc...) asparagine) is linked at asparagine 465. Active-site residues include aspartate 468 and glutamate 477. The N-linked (GlcNAc...) asparagine glycan is linked to asparagine 561.

The protein belongs to the glycosyl hydrolase 9 (cellulase E) family.

Its subcellular location is the secreted. The catalysed reaction is Endohydrolysis of (1-&gt;4)-beta-D-glucosidic linkages in cellulose, lichenin and cereal beta-D-glucans.. The sequence is that of Endoglucanase 5 from Arabidopsis thaliana (Mouse-ear cress).